Reading from the N-terminus, the 416-residue chain is PDZ and LIM domain protein 7 (416 aa).

One can recognise a PDZ domain in the interval 1–85; that stretch reads MESYKVMLNG…RLCLTLSRAQ (85 aa). Disordered regions lie at residues 145–191 and 202–221; these read CTPQ…AVDP and TSTV…MQNR. Low complexity predominate over residues 168 to 181; it reads PGLAPRTPAATPGP. 3 consecutive LIM zinc-binding domains span residues 239-297, 298-357, and 358-416; these read PLCY…TRYA, PSCA…MFGT, and KCRG…FSHV.

Interacts with various PKC isoforms through the LIM zinc-binding domains. Interacts with TPM2. Interacts with TBX4 and TBX5.

The protein localises to the cytoplasm. It is found in the cytoskeleton. Its subcellular location is the myofibril. The protein resides in the sarcomere. It localises to the z line. May function as a scaffold on which the coordinated assembly of proteins can occur. May play a role as an adapter that, via its PDZ domain, localizes LIM-binding proteins to actin filaments of both skeletal muscle and nonmuscle tissues. May be involved in bone formation. This Gallus gallus (Chicken) protein is PDZ and LIM domain protein 7 (PDLIM7).